An 885-amino-acid polypeptide reads, in one-letter code: DNA polymerase eta (885 aa).

The UmuC domain occupies 18 to 274 (VLLVDMDCFF…LPVGKIKGLG (257 aa)). Residues aspartate 22 and methionine 23 each contribute to the Mg(2+) site. Residues aspartate 22 and methionine 23 each coordinate Mn(2+). Residue arginine 70 coordinates a 2'-deoxyribonucleoside 5'-triphosphate. Mg(2+) contacts are provided by aspartate 125 and glutamate 126. Residues aspartate 125 and glutamate 126 each coordinate Mn(2+). Glutamate 126 is an active-site residue. Disordered stretches follow at residues 599–653 (AIEA…DLYV) and 658–677 (VPPTLTEDELKPSTSKRKFD). Over residues 608–618 (FEEDTEEETEL) the composition is skewed to acidic residues. Positions 628–649 (EGQSSDAGQEQDPNTLNDSTGN) are enriched in polar residues. Residues 701–737 (DILPTIKCDQCGANIPDEVKSLQTHRDHHFAQELSRT) form a UBZ3-type 1 zinc finger. Zn(2+)-binding residues include cysteine 708, cysteine 711, histidine 725, and histidine 729. The segment at 722–783 (LQTHRDHHFA…YSTAPPSNSI (62 aa)) is disordered. Basic and acidic residues predominate over residues 739 to 748 (RSTEREERTQ). Low complexity predominate over residues 766–780 (TAGSGSSSYSTAPPS). The segment at 798 to 832 (SDPQMNQCPECKAFIKCVDMPEHLDYHVARNLQRE) adopts a UBZ3-type 2 zinc-finger fold. Zn(2+) contacts are provided by cysteine 805, cysteine 808, histidine 820, and histidine 824. Residues 846-870 (NKEKISPVQPKKQSQKKLNSTISAS) form a disordered region.

Belongs to the DNA polymerase type-Y family. Interacts (via C-terminus) with nopo. Requires Mg(2+) as cofactor. It depends on Mn(2+) as a cofactor. Ubiquitination enhanced by nopo. Expressed in ovaries and testes.

Its subcellular location is the nucleus. It carries out the reaction DNA(n) + a 2'-deoxyribonucleoside 5'-triphosphate = DNA(n+1) + diphosphate. Its activity is regulated as follows. The enzyme in complex with the DNA substrate binds a third divalent metal cation. This binding is essential for catalyzing the DNA synthesis. Its function is as follows. DNA polymerase specifically involved in the DNA repair by translesion synthesis (TLS). Plays an important role in translesion synthesis, where the normal high-fidelity DNA polymerases cannot proceed and DNA synthesis stalls. Inserts one or 2 nucleotide(s) opposite the lesion. During homologous recombination (HR) repair, has a overlapping role with the error-prone translesion polymerase PolZ1/DNApol-zeta to initiate repair synthesis that is completed by end joining or another polymerase that can bind and reinitiate synthesis. Particularly important for the repair of UV-induced pyrimidine dimers and for hydroxyurea (HU)-induced DNA damage. Although inserts the correct base, may cause base transitions and transversions depending upon the context. Forms a Schiff base with 5'-deoxyribose phosphate at abasic sites, but does not have any lyase activity, preventing the release of the 5'-deoxyribose phosphate (5'-dRP) residue. This covalent trapping of the enzyme by the 5'-dRP residue inhibits its DNA synthetic activity during base excision repair, thereby avoiding high incidence of mutagenesis. This Drosophila melanogaster (Fruit fly) protein is DNA polymerase eta.